The following is a 461-amino-acid chain: Ribulose bisphosphate carboxylase (461 aa).

Asn112 serves as a coordination point for substrate. The active-site Proton acceptor is Lys167. Lys169 is a substrate binding site. Mg(2+) contacts are provided by Lys192, Asp194, and Glu195. Lys192 is subject to N6-carboxylysine. His288 serves as the catalytic Proton acceptor. Substrate is bound by residues Arg289, His322, and Ser369.

The protein belongs to the RuBisCO large chain family. Type II subfamily. In terms of assembly, homodimer. The cofactor is Mg(2+).

The enzyme catalyses 2 (2R)-3-phosphoglycerate + 2 H(+) = D-ribulose 1,5-bisphosphate + CO2 + H2O. The catalysed reaction is D-ribulose 1,5-bisphosphate + O2 = 2-phosphoglycolate + (2R)-3-phosphoglycerate + 2 H(+). Its function is as follows. RuBisCO catalyzes two reactions: the carboxylation of D-ribulose 1,5-bisphosphate, the primary event in carbon dioxide fixation, as well as the oxidative fragmentation of the pentose substrate. Both reactions occur simultaneously and in competition at the same active site. The sequence is that of Ribulose bisphosphate carboxylase from Rhodopseudomonas palustris (strain BisB5).